A 38-amino-acid chain; its full sequence is GLSQSGCQAFTGRWCVGCERLRSRVVWECSPKRVVNSI.

Post-translationally, contains 2 disulfide bonds. In terms of tissue distribution, expressed by the venom duct.

It localises to the secreted. The chain is Augerpeptide hhe53 from Hastula hectica (Sea snail).